The chain runs to 460 residues: ATP synthase subunit beta (460 aa).

150 to 157 (GGAGVGKT) contacts ATP.

The protein belongs to the ATPase alpha/beta chains family. F-type ATPases have 2 components, CF(1) - the catalytic core - and CF(0) - the membrane proton channel. CF(1) has five subunits: alpha(3), beta(3), gamma(1), delta(1), epsilon(1). CF(0) has three main subunits: a(1), b(2) and c(9-12). The alpha and beta chains form an alternating ring which encloses part of the gamma chain. CF(1) is attached to CF(0) by a central stalk formed by the gamma and epsilon chains, while a peripheral stalk is formed by the delta and b chains.

It localises to the cell inner membrane. The catalysed reaction is ATP + H2O + 4 H(+)(in) = ADP + phosphate + 5 H(+)(out). Produces ATP from ADP in the presence of a proton gradient across the membrane. The catalytic sites are hosted primarily by the beta subunits. This chain is ATP synthase subunit beta, found in Edwardsiella ictaluri (strain 93-146).